A 101-amino-acid polypeptide reads, in one-letter code: NADH-quinone oxidoreductase subunit K (101 aa).

Transmembrane regions (helical) follow at residues 4–24, 30–50, and 61–81; these read LTHY…GIFM, LVLL…FIAF, and IFVF…LAIM.

It belongs to the complex I subunit 4L family. As to quaternary structure, NDH-1 is composed of 14 different subunits. Subunits NuoA, H, J, K, L, M, N constitute the membrane sector of the complex.

It is found in the cell inner membrane. It carries out the reaction a quinone + NADH + 5 H(+)(in) = a quinol + NAD(+) + 4 H(+)(out). Functionally, NDH-1 shuttles electrons from NADH, via FMN and iron-sulfur (Fe-S) centers, to quinones in the respiratory chain. The immediate electron acceptor for the enzyme in this species is believed to be ubiquinone. Couples the redox reaction to proton translocation (for every two electrons transferred, four hydrogen ions are translocated across the cytoplasmic membrane), and thus conserves the redox energy in a proton gradient. The polypeptide is NADH-quinone oxidoreductase subunit K (Neisseria meningitidis serogroup B (strain ATCC BAA-335 / MC58)).